The following is a 3961-amino-acid chain: Replicase polyprotein 1ab (3961 aa).

The C4-type; atypical zinc-finger motif lies at cysteine 8 to cysteine 28. The Peptidase C31 domain occupies glutamate 69–methionine 180. Residues glutamate 69–aspartate 182 are PCP1-alpha. Active-site for Nsp1-alpha papain-like cysteine proteinase activity residues include cysteine 76 and histidine 146. Positions valine 199–serine 200 are important for host EIF2AK2 inhibition. The tract at residues aspartate 263–tyrosine 382 is PCP1-beta. The region spanning aspartate 263 to glycine 383 is the Peptidase C32 domain. Residues cysteine 270 and histidine 339 each act as for Nsp1-beta papain-like cysteine proteinase activity in the active site. The OTU-like stretch occupies residues leucine 426 to proline 513. The region spanning leucine 428 to leucine 535 is the Peptidase C33 domain. Catalysis depends on for Nsp2 cysteine proteinase activity residues cysteine 437 and histidine 506. Over residues tryptophan 810–valine 819 the composition is skewed to pro residues. Disordered stretches follow at residues tryptophan 810 to proline 875, threonine 899 to methionine 918, and threonine 1148 to threonine 1191. 7 helical membrane-spanning segments follow: residues phenylalanine 1266–phenylalanine 1286, glycine 1296–valine 1316, valine 1368–valine 1388, leucine 1583–valine 1603, leucine 1648–valine 1668, cysteine 1685–phenylalanine 1705, and isoleucine 1719–valine 1739. The tract at residues phenylalanine 1266 to valine 1388 is HD1. An HD2 region spans residues leucine 1583–tryptophan 1745. In terms of domain architecture, Peptidase S32 spans glycine 1810–glutamate 2013. Residues histidine 1848, aspartate 1873, and serine 1927 each act as charge relay system; for 3C-like serine proteinase activity in the active site. Helical transmembrane passes span tryptophan 2036–valine 2056, phenylalanine 2060–isoleucine 2080, leucine 2092–threonine 2112, serine 2137–phenylalanine 2157, and leucine 2162–alanine 2182. The segment at tryptophan 2036 to phenylalanine 2157 is HD3. The 164-residue stretch at isoleucine 2488–glycine 2651 folds into the NiRAN domain. The 135-residue stretch at glycine 2890–tyrosine 3024 folds into the RdRp catalytic domain. The 64-residue stretch at glycine 3145–leucine 3208 folds into the AV ZBD domain. Cysteine 3151, cysteine 3154, cysteine 3164, cysteine 3169, histidine 3172, histidine 3174, histidine 3176, histidine 3178, cysteine 3185, histidine 3187, cysteine 3194, and cysteine 3197 together coordinate Zn(2+). The region spanning alanine 3265–leucine 3417 is the (+)RNA virus helicase ATP-binding domain. Glycine 3293–threonine 3300 lines the ATP pocket. The (+)RNA virus helicase C-terminal domain maps to lysine 3418 to valine 3546. An AV-Nsp11N/CoV-Nsp15M domain is found at glutamate 3585–glutamine 3681. The 123-residue stretch at leucine 3683–phenylalanine 3805 folds into the NendoU domain. Residues histidine 3714, histidine 3729, and lysine 3758 contribute to the active site.

It belongs to the arteriviridae polyprotein family. Nsp1-alpha papain-like: Interacts with host RNF31. In terms of assembly, interacts with host EIF2AK2; this interaction occurs in host stress granules and leads to EIF2AK2 inhibition. Interacts with host G3BP1; this interaction probably plays a role in Nsp1-beta-mediated inhibition of host EIF2AK2. As to quaternary structure, interacts with host DDX18; this interaction redistributes host DDX18 to the cytoplasm. Interacts with host IFITM1. In terms of assembly, interacts with host DDX5. As to quaternary structure, interacts with host OTULIN. Interacts with host LGALS3. In terms of processing, specific enzymatic cleavages in vivo by its own proteases yield mature proteins. Nsp1 is autocleaved into two subunits, Nsp1-alpha and Nsp1-beta. There are two alternative pathways for processing. Either nsp4-5 is cleaved, which represents the major pathway or the nsp5-6 and nsp6-7 are processed, which represents the minor pathway. The major pathway occurs when nsp2 acts as a cofactor for nsp4.

It localises to the host nucleus. The protein resides in the host cytoplasm. It is found in the host membrane. The protein localises to the host endoplasmic reticulum. Its subcellular location is the host perinuclear region. The enzyme catalyses RNA(n) + a ribonucleoside 5'-triphosphate = RNA(n+1) + diphosphate. It catalyses the reaction ATP + H2O = ADP + phosphate + H(+). The catalysed reaction is Thiol-dependent hydrolysis of ester, thioester, amide, peptide and isopeptide bonds formed by the C-terminal Gly of ubiquitin (a 76-residue protein attached to proteins as an intracellular targeting signal).. It carries out the reaction uridylyl-uridylyl-ribonucleotide-RNA = a 3'-end uridylyl-2',3'-cyclophospho-uridine-RNA + a 5'-end dephospho-ribonucleoside-RNA. In terms of biological role, contains the activities necessary for the transcription of negative stranded RNA, leader RNA, subgenomic mRNAs and progeny virion RNA as well as proteinases responsible for the cleavage of the polyprotein into functional products. Inhibits host IFN-beta production. Plays a role in the degradation of the host transcriptional activator CREBBP protein. The degradation of host CREBBP which is a key component of the IFN enhanceosome is likely responsible for the inhibition of interferon mediated by Nsp1-alpha. Also participates in the inhibition of host NF-kappa-B activation by counteracting LUBAC-dependent induction of NF-kappa-B. Reduces host NEMO ubiquitination by blocking the interaction between the two LUBAC complex components RNF31 and SHARPIN. Its function is as follows. Plays a role in blocking host mRNA nuclear export to the cytoplasm and subversion of host protein synthesis. Additionally, inhibits the interferon-activated JAK/STAT signal transduction by mediating the ubiquitination and subsequent proteasomal degradation of host KPNA1. Repurposes the host antiviral stress granules into a proviral platform to counteract the EIF2AK2/PKR restriction, thereby regulating the host inflammatory response. Functionally, multifunctional protein that acts as a viral protease and as a viral antagonist of host immune response. Cleaves the nsp2/nsp3 site in the viral polyprotein. Displays deubiquitinating activity that cleaves both ubiquitinated and ISGylated products and therefore inhibits ubiquitin and ISG15-dependent host innate immunity. Also deubiquinates host NFKBIA, thereby interfering with NFKBIA degradation and impairing subsequent NF-kappa-B activation. In terms of biological role, plays a role in the inhibition of the immune response by interacting with host IFITM1. This interaction leads to the proteasomal degradation of the IFN-induced antiviral protein IFITM1. Cleaves the majority of cleavage sites present in the C-terminus of the polyprotein. Triggers host apoptosis through caspase-3, -8, and -9 activations. Subverts host innate immune responses through its protease activity. Targets the NF-kappa-B essential modulator NEMO and mediates its cleavage. Blocks host interferon beta induction and downstream signaling by cleaving mitochondrial MAVS, dislodging it from the mitochondria. Impairs host defense by cleaving host mRNA-decapping enzyme DCP1A to attenuate its antiviral activity. Its function is as follows. Plays a role in the initial induction of autophagosomes from host endoplasmic reticulum. Functionally, plays a role in the inhibition of host STAT3 signaling pathway by inducing the degradation of STAT3. In terms of biological role, responsible for replication and transcription of the viral RNA genome. Displays RNA and DNA duplex-unwinding activities with 5' to 3' polarity. Its function is as follows. Plays a role in viral transcription/replication and prevents the simultaneous activation of host cell dsRNA sensors, such as MDA5/IFIH1, OAS, PKR and NLRP3 inflammasome. Acts by degrading the 5'-polyuridines generated during replication of the poly(A) region of viral genomic and subgenomic RNAs. Catalyzes a two-step reaction in which a 2'3'-cyclic phosphate (2'3'-cP) is first generated by 2'-O transesterification, which is then hydrolyzed to a 3'-phosphate (3'-P). If not degraded, poly(U) RNA would hybridize with poly(A) RNA tails and activate host dsRNA sensors. Also plays a role in the inhibition of host type I interferon production by recruiting host OTULIN to promote removal of linear ubiquitination targeting host NEMO. This is Replicase polyprotein 1ab (rep) from Porcine reproductive and respiratory syndrome virus (strain HB-1) (PRRSV).